A 339-amino-acid polypeptide reads, in one-letter code: Meiotic recombination protein rec7 (339 aa).

Its function is as follows. May be involved primarily in the early steps of meiotic recombination. The chain is Meiotic recombination protein rec7 (rec7) from Schizosaccharomyces pombe (strain 972 / ATCC 24843) (Fission yeast).